Here is a 373-residue protein sequence, read N- to C-terminus: 4-hydroxy-3-methylbut-2-en-1-yl diphosphate synthase (flavodoxin) (373 aa).

Positions 270, 273, 305, and 312 each coordinate [4Fe-4S] cluster.

The protein belongs to the IspG family. [4Fe-4S] cluster is required as a cofactor.

It catalyses the reaction (2E)-4-hydroxy-3-methylbut-2-enyl diphosphate + oxidized [flavodoxin] + H2O + 2 H(+) = 2-C-methyl-D-erythritol 2,4-cyclic diphosphate + reduced [flavodoxin]. Its pathway is isoprenoid biosynthesis; isopentenyl diphosphate biosynthesis via DXP pathway; isopentenyl diphosphate from 1-deoxy-D-xylulose 5-phosphate: step 5/6. Converts 2C-methyl-D-erythritol 2,4-cyclodiphosphate (ME-2,4cPP) into 1-hydroxy-2-methyl-2-(E)-butenyl 4-diphosphate. The chain is 4-hydroxy-3-methylbut-2-en-1-yl diphosphate synthase (flavodoxin) from Proteus mirabilis (strain HI4320).